We begin with the raw amino-acid sequence, 2097 residues long: 1-phosphatidylinositol 3-phosphate 5-kinase (2097 aa).

The tract at residues 1-44 (MATDDKSSPTLDSANDLPRSPASPSHLTHFKPLTPDQDEPPFKS) is disordered. Position 2 is an N-acetylalanine (alanine 2). 2 positions are modified to phosphoserine; by autocatalysis: serine 23 and serine 48. The segment at 56 to 122 (NKERGEGGQG…AEPACGGHDP (67 aa)) is disordered. Over residues 66–81 (EQQSPSSSWASPQIPS) the composition is skewed to low complexity. Residue serine 88 is modified to Phosphoserine. An FYVE-type zinc finger spans residues 158-218 (DSQCKECYDC…ACTYCRKIAL (61 aa)). Residues cysteine 164, cysteine 167, cysteine 180, cysteine 183, cysteine 188, cysteine 191, cysteine 210, and cysteine 213 each contribute to the Zn(2+) site. Phosphoserine occurs at positions 299, 307, and 312. Position 318 is a phosphoserine; by PKB/AKT1 or PKB/AKT2 (serine 318). Position 329 is a phosphoserine (serine 329). Positions 365-440 (HTSGMEFQDH…DEYALYRPLQ (76 aa)) constitute a DEP domain. Polar residues predominate over residues 442–459 (TEFSETPSPDSDSVNSVE). The tract at residues 442–469 (TEFSETPSPDSDSVNSVEGHSEPSWFKD) is disordered. The segment covering 460–469 (GHSEPSWFKD) has biased composition (basic and acidic residues). At serine 475 the chain carries Phosphoserine. The interval 484-505 (GDDNLANSASPSKRTSVSSFQS) is disordered. Residues 488–505 (LANSASPSKRTSVSSFQS) show a composition bias toward polar residues. Residues 616–868 (MMALLQQLLQ…MICVAYHSQL (253 aa)) are chaperonin-like domain. Disordered regions lie at residues 895–928 (GRGE…EDST), 989–1022 (AVGN…QDDT), 1171–1194 (HSKD…EERG), and 1511–1555 (FQQE…HNGE). The span at 902 to 912 (SQEQVSGSSLP) shows a compositional bias: polar residues. Residues 1175–1184 (ASCTSGGKSG) are compositionally biased toward polar residues. The segment covering 1185-1194 (NKTESDEERG) has biased composition (basic and acidic residues). A phosphoserine mark is found at serine 1543 and serine 1548. A Phosphoserine; by autocatalysis modification is found at serine 1668. Residues 1697–1742 (EGLPANSALDNRPKSSSPIRLPEISGGQTNRTVEAEPQPTKKASGM) form a disordered region. A Phosphoserine modification is found at serine 1753. Residues 1757 to 2083 (SSQKRETLRG…RFCEAMDKYF (327 aa)) form the PIPK domain. The tract at residues 1781–1800 (GLESQGLEPQDEVDGGDTQK) is disordered. The catalytic stretch occupies residues 1841 to 2097 (EEEFIRSLSH…DHWTGLDLNC (257 aa)). Serine 1968 and serine 2052 each carry phosphoserine; by autocatalysis.

Component of the PI(3,5)P2 regulatory complex/PAS complex, at least composed of PIKFYVE, FIG4 and VAC14. VAC14 nucleates the assembly of the complex and serves as a scaffold by pentamerizing into a star-shaped structure, which can bind a single copy each of PIKFYVE and FIG4 and coordinates their activities. Interacts (via chaperonin-like domain) with RABEPK; the interaction recruits RABEPK to the endosomal membrane. Interacts with SPAG9. Interacts with EGFR. It depends on Mn(2+) as a cofactor. Post-translationally, phosphorylated in response to insulin at Ser-318 in a protein kinase B (PKB)-dependent manner. Autophosphorylates which down-regulates lipid product formation. In terms of processing, autophosphorylates which inhibits its own phosphatidylinositol 3-phosphate 5-kinase activity, stimulates FIG4 lipid phosphatase activity and down-regulates lipid product formation. Dephosphorylated by FIG4 in the PI(3,5)P2 regulatory complex, at Ser-48, Ser-1668 and Ser-2052. Phosphorylated in response to insulin at Ser-318 in a protein kinase B (PKB)-dependent manner. In terms of tissue distribution, ubiquitous.

It localises to the endosome membrane. The protein localises to the early endosome membrane. It is found in the cytoplasmic vesicle. The protein resides in the phagosome membrane. Its subcellular location is the late endosome membrane. It carries out the reaction a 1,2-diacyl-sn-glycero-3-phospho-(1D-myo-inositol-3-phosphate) + ATP = a 1,2-diacyl-sn-glycero-3-phospho-(1D-myo-inositol-3,5-bisphosphate) + ADP + H(+). The enzyme catalyses a 1,2-diacyl-sn-glycero-3-phospho-(1D-myo-inositol) + ATP = a 1,2-diacyl-sn-glycero-3-phospho-(1D-myo-inositol-5-phosphate) + ADP + H(+). The catalysed reaction is L-seryl-[protein] + ATP = O-phospho-L-seryl-[protein] + ADP + H(+). With respect to regulation, inhibited by apilimod and YM201636. Dual specificity kinase implicated in myriad essential cellular processes such as maintenance of endomembrane homeostasis, and endocytic-vacuolar pathway, lysosomal trafficking, nuclear transport, stress- or hormone-induced signaling and cell cycle progression. The PI(3,5)P2 regulatory complex regulates both the synthesis and turnover of phosphatidylinositol 3,5-bisphosphate (PtdIns(3,5)P2). Sole enzyme to catalyze the phosphorylation of phosphatidylinositol 3-phosphate on the fifth hydroxyl of the myo-inositol ring, to form (PtdIns(3,5)P2). Also catalyzes the phosphorylation of phosphatidylinositol on the fifth hydroxyl of the myo-inositol ring, to form phosphatidylinositol 5-phosphate (PtdIns(5)P). Has serine-protein kinase activity and is able to autophosphorylate and transphosphorylate. Autophosphorylation inhibits its own phosphatidylinositol 3-phosphate 5-kinase activity, stimulates FIG4 lipid phosphatase activity and down-regulates lipid product formation. Involved in key endosome operations such as fission and fusion in the course of endosomal cargo transport. Required for the maturation of early into late endosomes, phagosomes and lysosomes. Regulates vacuole maturation and nutrient recovery following engulfment of macromolecules, initiates the redistribution of accumulated lysosomal contents back into the endosome network. Critical regulator of the morphology, degradative activity, and protein turnover of the endolysosomal system in macrophages and platelets. In neutrophils, critical to perform chemotaxis, generate ROS, and undertake phagosome fusion with lysosomes. Plays a key role in the processing and presentation of antigens by major histocompatibility complex class II (MHC class II) mediated by CTSS. Regulates melanosome biogenesis by controlling the delivery of proteins from the endosomal compartment to the melanosome. Essential for systemic glucose homeostasis, mediates insulin-induced signals for endosome/actin remodeling in the course of GLUT4 translocation/glucose uptake activation. Supports microtubule-based endosome-to-trans-Golgi network cargo transport, trhough association with SPAG9 and RABEPK. Mediates EGFR trafficking to the nucleus. This is 1-phosphatidylinositol 3-phosphate 5-kinase from Mus musculus (Mouse).